A 293-amino-acid polypeptide reads, in one-letter code: Probable endonuclease 4 (293 aa).

Residues histidine 78, histidine 118, glutamate 154, aspartate 188, histidine 191, histidine 225, aspartate 238, histidine 240, and glutamate 270 each contribute to the Zn(2+) site.

It belongs to the AP endonuclease 2 family. Zn(2+) is required as a cofactor.

The catalysed reaction is Endonucleolytic cleavage to 5'-phosphooligonucleotide end-products.. Functionally, endonuclease IV plays a role in DNA repair. It cleaves phosphodiester bonds at apurinic or apyrimidinic (AP) sites, generating a 3'-hydroxyl group and a 5'-terminal sugar phosphate. This is Probable endonuclease 4 from Vibrio vulnificus (strain CMCP6).